The chain runs to 204 residues: Glycerol-3-phosphate acyltransferase (204 aa).

4 consecutive transmembrane segments (helical) span residues 8–28, 76–96, 122–142, and 166–186; these read NAQFFIAAYLIGAIPFGLLLA, GVLVLLFAYFYGVSEATLWGI, MGVMMFMLPLETIIALVVWAL, and FILHPDMAHAPVIIIGFVLLY.

Belongs to the PlsY family. As to quaternary structure, probably interacts with PlsX.

It localises to the cell inner membrane. It catalyses the reaction an acyl phosphate + sn-glycerol 3-phosphate = a 1-acyl-sn-glycero-3-phosphate + phosphate. It functions in the pathway lipid metabolism; phospholipid metabolism. Its function is as follows. Catalyzes the transfer of an acyl group from acyl-phosphate (acyl-PO(4)) to glycerol-3-phosphate (G3P) to form lysophosphatidic acid (LPA). This enzyme utilizes acyl-phosphate as fatty acyl donor, but not acyl-CoA or acyl-ACP. The protein is Glycerol-3-phosphate acyltransferase of Sulfurimonas denitrificans (strain ATCC 33889 / DSM 1251) (Thiomicrospira denitrificans (strain ATCC 33889 / DSM 1251)).